The primary structure comprises 611 residues: ANK repeat-containing protein nipk-1 (611 aa).

The stretch at 91–149 forms a coiled coil; sequence NSKSKKKTENQETKEKDEEAEEKKDGPPKDDKELKMKKEKEQEDENAELDEQKKDGDLL. Disordered stretches follow at residues 92–167, 212–255, and 280–333; these read SKSK…SHPY, ISAS…DTSR, and TKEE…LSPR. The span at 97-131 shows a compositional bias: basic and acidic residues; it reads KTENQETKEKDEEAEEKKDGPPKDDKELKMKKEKE. Composition is skewed to polar residues over residues 212–223, 239–255, and 315–333; these read ISASTTPDTVLS, ESLQSPFSDISSADTSR, and GTCSGPTTPSFNQTRLSPR. ANK repeat units follow at residues 375-405, 417-446, 452-482, 486-527, and 532-561; these read DGDTPLHIVAAHNDLGKIYALCETLRKTMNE, FGETPLYVAVLQRSIEVVEYLLELGASPNS, VGDSPLHFATARGMNNMVEALLSKREIRVNE, DGQT…DPTI, and TGKTIVHHAVDKMDVELLDFLKTVVNEDTF.

Belongs to the iASPP family. As to expression, expressed in the nervous system.

Its function is as follows. Acts downstream of the receptor complex composed of ilcr-1 and ilcr-2, which is a signaling complex that modulates neuronal activity and animal behavior in response to sensory neuron input. Mediates signaling of the complex. The chain is ANK repeat-containing protein nipk-1 from Caenorhabditis elegans.